Here is a 534-residue protein sequence, read N- to C-terminus: Melanopsin-B (534 aa).

Residues Met1–Ser32 are Extracellular-facing. Residues Phe33–Tyr53 form a helical membrane-spanning segment. Topologically, residues Arg54–Tyr64 are cytoplasmic. A helical transmembrane segment spans residues Phe65–Phe85. Over Leu86 to Val102 the chain is Extracellular. Cysteines 100 and 178 form a disulfide. Residues Tyr103–Ile123 form a helical membrane-spanning segment. The Cytoplasmic segment spans residues Asn124 to Gln146. Residues Ile147 to Ser167 form a helical membrane-spanning segment. Residues Ser168–Cys198 are Extracellular-facing. N-linked (GlcNAc...) asparagine glycosylation is present at Asn189. The helical transmembrane segment at Cys199–Ile219 threads the bilayer. Over Arg220–Lys250 the chain is Cytoplasmic. The helical transmembrane segment at Ile251 to Leu271 threads the bilayer. At Ile272–Lys286 the chain is on the extracellular side. The helical transmembrane segment at Thr287–Ile307 threads the bilayer. N6-(retinylidene)lysine is present on Lys294. The Cytoplasmic portion of the chain corresponds to His308–Ser534. Residues Ser478 to Glu501 are disordered. The segment covering Glu482 to Glu499 has biased composition (basic and acidic residues).

The protein belongs to the G-protein coupled receptor 1 family. Opsin subfamily. Highest level in the iris, high level in the inner nuclear layer, possibly in horizontal cells, and lowest level in retinal pigment epithelium. Expressed in melanophore cells of the skin.

Its subcellular location is the cell membrane. In terms of biological role, photoreceptor implicated in non-image-forming responses to light. May be able to isomerize covalently bound all-trans retinal back to 11-cis retinal. This Xenopus laevis (African clawed frog) protein is Melanopsin-B.